The chain runs to 151 residues: Putative pre-16S rRNA nuclease (151 aa).

The protein belongs to the YqgF nuclease family.

Its subcellular location is the cytoplasm. Could be a nuclease involved in processing of the 5'-end of pre-16S rRNA. The chain is Putative pre-16S rRNA nuclease from Gloeothece citriformis (strain PCC 7424) (Cyanothece sp. (strain PCC 7424)).